We begin with the raw amino-acid sequence, 486 residues long: Protein nucleotidyltransferase YdiU (486 aa).

ATP is bound by residues Gly90, Gly92, Arg93, Lys113, Asp125, Gly126, Arg176, and Arg183. Asp252 acts as the Proton acceptor in catalysis. Positions 253 and 262 each coordinate Mg(2+). Asp262 is an ATP binding site.

The protein belongs to the SELO family. The cofactor is Mg(2+). Mn(2+) is required as a cofactor.

It catalyses the reaction L-seryl-[protein] + ATP = 3-O-(5'-adenylyl)-L-seryl-[protein] + diphosphate. The enzyme catalyses L-threonyl-[protein] + ATP = 3-O-(5'-adenylyl)-L-threonyl-[protein] + diphosphate. It carries out the reaction L-tyrosyl-[protein] + ATP = O-(5'-adenylyl)-L-tyrosyl-[protein] + diphosphate. The catalysed reaction is L-histidyl-[protein] + UTP = N(tele)-(5'-uridylyl)-L-histidyl-[protein] + diphosphate. It catalyses the reaction L-seryl-[protein] + UTP = O-(5'-uridylyl)-L-seryl-[protein] + diphosphate. The enzyme catalyses L-tyrosyl-[protein] + UTP = O-(5'-uridylyl)-L-tyrosyl-[protein] + diphosphate. Its function is as follows. Nucleotidyltransferase involved in the post-translational modification of proteins. It can catalyze the addition of adenosine monophosphate (AMP) or uridine monophosphate (UMP) to a protein, resulting in modifications known as AMPylation and UMPylation. This Pseudomonas putida (strain W619) protein is Protein nucleotidyltransferase YdiU.